The chain runs to 653 residues: Protein SCARECROW (653 aa).

Disordered stretches follow at residues 1–69 and 193–265; these read MAES…RRVS and PSSS…AVQT. Residues 17–31 show a composition bias toward low complexity; that stretch reads PLRTTSSGSSSSNNR. Residues 32-41 show a composition bias toward pro residues; that stretch reads GPPPPPPPPL. Residues 51-63 are compositionally biased toward polar residues; that stretch reads EMSSNPDYNNSSR. Residues 209–230 show a composition bias toward low complexity; it reads QISNNPSPPQQQQQHQQQQQQH. The span at 246–265 shows a compositional bias: polar residues; that stretch reads STDAPPQPETVTATVPAVQT. One can recognise a GRAS domain in the interval 281–650; that stretch reads QKQDEEGLHL…LSLLTASAWT (370 aa). Residues 288-351 are leucine repeat I (LRI); that stretch reads LHLLTLLLQC…LLNSCLGIYA (64 aa). A LxCxE motif motif is present at residues 295-299; it reads LQCAE. Residues 370 to 435 are VHIID; that stretch reads FQVFNGISPL…GGPPHVRLTG (66 aa). The short motif at 401 to 405 is the VHIID element; the sequence is VHIID. Residues 445–477 are leucine repeat II (LRII); it reads ATGKRLSDFADKLGLPFEFCPLAEKVGNLDTER. The interval 486-573 is PFYRE; that stretch reads VAVHWLQHSL…QQLLSKEIRN (88 aa). Residues 576–650 are SAW; that stretch reads AVGGPSRSGE…LSLLTASAWT (75 aa).

The protein belongs to the GRAS family. As to quaternary structure, interacts with SHR, JKD and MGP. Interacts with SIEL. Interacts with RBR1 through its the LxCxE motif. In terms of tissue distribution, expressed in siliques, leaves and roots. Detected in the initial daughter cell before its asymmetric division and remains expressed only in the endodermal cell layer after the division. Expressed in the endodermis or starch sheath of the seedling hypocotyl, in the leaf bundle sheath cells and the root quiescent center.

Its subcellular location is the nucleus. Transcription factor required for quiescent center cells specification and maintenance of surrounding stem cells, and for the asymmetric cell division involved in radial pattern formation in roots. Essential for cell division but not differentiation of the ground tissue. Also required for normal shoot gravitropism. Regulates the radial organization of the shoot axial organs. Binds to the promoter of MGP, NUC, RLK and SCL3. Restricts SHR movment and sequesters it into the nucleus of the endodermis. This is Protein SCARECROW from Arabidopsis thaliana (Mouse-ear cress).